Consider the following 78-residue polypeptide: MARKPVELDFESTLAQLEAVVTELERGDLPLESALKEFETGIKLAKQGQERLQQAEQRIQILLQKSDTAPLTDYSADE.

This sequence belongs to the XseB family. As to quaternary structure, heterooligomer composed of large and small subunits.

It is found in the cytoplasm. The enzyme catalyses Exonucleolytic cleavage in either 5'- to 3'- or 3'- to 5'-direction to yield nucleoside 5'-phosphates.. Its function is as follows. Bidirectionally degrades single-stranded DNA into large acid-insoluble oligonucleotides, which are then degraded further into small acid-soluble oligonucleotides. The polypeptide is Exodeoxyribonuclease 7 small subunit (Actinobacillus succinogenes (strain ATCC 55618 / DSM 22257 / CCUG 43843 / 130Z)).